Reading from the N-terminus, the 101-residue chain is Large ribosomal subunit protein uL24 (101 aa).

The protein belongs to the universal ribosomal protein uL24 family. In terms of assembly, part of the 50S ribosomal subunit.

Functionally, one of two assembly initiator proteins, it binds directly to the 5'-end of the 23S rRNA, where it nucleates assembly of the 50S subunit. In terms of biological role, one of the proteins that surrounds the polypeptide exit tunnel on the outside of the subunit. The chain is Large ribosomal subunit protein uL24 from Streptococcus equi subsp. zooepidemicus (strain H70).